The chain runs to 237 residues: 1-(5-phosphoribosyl)-5-[(5-phosphoribosylamino)methylideneamino] imidazole-4-carboxamide isomerase (237 aa).

D8 (proton acceptor) is an active-site residue. The active-site Proton donor is the D129.

This sequence belongs to the HisA/HisF family.

It is found in the cytoplasm. It carries out the reaction 1-(5-phospho-beta-D-ribosyl)-5-[(5-phospho-beta-D-ribosylamino)methylideneamino]imidazole-4-carboxamide = 5-[(5-phospho-1-deoxy-D-ribulos-1-ylimino)methylamino]-1-(5-phospho-beta-D-ribosyl)imidazole-4-carboxamide. The protein operates within amino-acid biosynthesis; L-histidine biosynthesis; L-histidine from 5-phospho-alpha-D-ribose 1-diphosphate: step 4/9. In Methanosphaera stadtmanae (strain ATCC 43021 / DSM 3091 / JCM 11832 / MCB-3), this protein is 1-(5-phosphoribosyl)-5-[(5-phosphoribosylamino)methylideneamino] imidazole-4-carboxamide isomerase.